A 700-amino-acid polypeptide reads, in one-letter code: Elongation factor G 2 (700 aa).

The tr-type G domain maps to 8 to 290 (ERYRNIGISA…AVLDFLPSPI (283 aa)). GTP is bound by residues 17–24 (AHIDAGKT), 88–92 (DTPGH), and 142–145 (NKMD).

Belongs to the TRAFAC class translation factor GTPase superfamily. Classic translation factor GTPase family. EF-G/EF-2 subfamily.

Its subcellular location is the cytoplasm. Catalyzes the GTP-dependent ribosomal translocation step during translation elongation. During this step, the ribosome changes from the pre-translocational (PRE) to the post-translocational (POST) state as the newly formed A-site-bound peptidyl-tRNA and P-site-bound deacylated tRNA move to the P and E sites, respectively. Catalyzes the coordinated movement of the two tRNA molecules, the mRNA and conformational changes in the ribosome. This Paraburkholderia xenovorans (strain LB400) protein is Elongation factor G 2.